Reading from the N-terminus, the 194-residue chain is Peptidyl-tRNA hydrolase (194 aa).

A tRNA-binding site is contributed by Tyr17. His22 functions as the Proton acceptor in the catalytic mechanism. TRNA is bound by residues Phe68, Asn70, and Asn116.

It belongs to the PTH family. In terms of assembly, monomer.

Its subcellular location is the cytoplasm. The catalysed reaction is an N-acyl-L-alpha-aminoacyl-tRNA + H2O = an N-acyl-L-amino acid + a tRNA + H(+). Functionally, hydrolyzes ribosome-free peptidyl-tRNAs (with 1 or more amino acids incorporated), which drop off the ribosome during protein synthesis, or as a result of ribosome stalling. Its function is as follows. Catalyzes the release of premature peptidyl moieties from peptidyl-tRNA molecules trapped in stalled 50S ribosomal subunits, and thus maintains levels of free tRNAs and 50S ribosomes. The polypeptide is Peptidyl-tRNA hydrolase (Shewanella sediminis (strain HAW-EB3)).